Consider the following 103-residue polypeptide: METSNGTETWYMSLHAVLKALNTTLHSHLLCRPGPGPGPDNQTEDRRASLPGRNDNSYMYILFVMFLFAVTVGSLILGYTRSRKVDKRSDPYHVYIKNRVSMI.

Asparagine 5, asparagine 22, and asparagine 41 each carry an N-linked (GlcNAc...) asparagine glycan. A disordered region spans residues 30 to 52 (LCRPGPGPGPDNQTEDRRASLPG). The chain crosses the membrane as a helical span at residues 57–77 (SYMYILFVMFLFAVTVGSLIL). The interval 68–79 (FAVTVGSLILGY) is interaction with KCNQ1. Residues 78–103 (GYTRSRKVDKRSDPYHVYIKNRVSMI) lie on the Cytoplasmic side of the membrane.

Belongs to the potassium channel KCNE family. In terms of assembly, interacts with KCNB1. Interacts with KCNC2. Associates with KCNC4/Kv3.4. Interacts with KCNQ1; associates with a KCNQ1:KCNE3 stoichiometry of 4:4; produces a current with nearly instantaneous activation with a linear current-voltage relationship and alters membrane raft localization; affects KCNQ1 structure and gating properties.

It is found in the cell membrane. Its subcellular location is the cytoplasm. The protein resides in the perikaryon. It localises to the cell projection. The protein localises to the dendrite. It is found in the membrane raft. In terms of biological role, ancillary protein that functions as a regulatory subunit of the voltage-gated potassium (Kv) channel complex composed of pore-forming and potassium-conducting alpha subunits and of regulatory beta subunits. KCNE3 beta subunit modulates the gating kinetics and enhances stability of the channel complex. Alters the gating of the delayed rectifier Kv channel containing KCNB1 alpha subunit. Associates with KCNC4/Kv3.4 alpha subunit to form the subthreshold Kv channel in skeletal muscle and to establish the resting membrane potential (RMP) in muscle cells. Association with KCNQ1/KCLQT1 alpha subunit may form the intestinal cAMP-stimulated potassium channel involved in chloride secretion that produces a current with nearly instantaneous activation with a linear current-voltage relationship. This is Potassium voltage-gated channel subfamily E member 3 from Mus musculus (Mouse).